The following is a 464-amino-acid chain: Bifunctional protein GlmU (464 aa).

Residues 1-231 (MDVVIMAAGK…ATQVAGVNSP (231 aa)) are pyrophosphorylase. Residues K20, Q78, 83 to 84 (GT), 105 to 107 (SGD), G142, E156, and N229 contribute to the UDP-N-acetyl-alpha-D-glucosamine site. D107 contacts Mg(2+). A Mg(2+)-binding site is contributed by N229. The interval 232–252 (VQLAALERAFQSKVALQLMEQ) is linker. The tract at residues 253-464 (GVRLADPARL…SIANWKRPSK (212 aa)) is N-acetyltransferase. UDP-N-acetyl-alpha-D-glucosamine contacts are provided by R343 and K361. H373 serves as the catalytic Proton acceptor. Residues Y376 and N387 each contribute to the UDP-N-acetyl-alpha-D-glucosamine site. Acetyl-CoA contacts are provided by residues A390, 396-397 (NY), S415, G433, and R450.

In the N-terminal section; belongs to the N-acetylglucosamine-1-phosphate uridyltransferase family. The protein in the C-terminal section; belongs to the transferase hexapeptide repeat family. As to quaternary structure, homotrimer. Requires Mg(2+) as cofactor.

The protein localises to the cytoplasm. It catalyses the reaction alpha-D-glucosamine 1-phosphate + acetyl-CoA = N-acetyl-alpha-D-glucosamine 1-phosphate + CoA + H(+). It carries out the reaction N-acetyl-alpha-D-glucosamine 1-phosphate + UTP + H(+) = UDP-N-acetyl-alpha-D-glucosamine + diphosphate. Its pathway is nucleotide-sugar biosynthesis; UDP-N-acetyl-alpha-D-glucosamine biosynthesis; N-acetyl-alpha-D-glucosamine 1-phosphate from alpha-D-glucosamine 6-phosphate (route II): step 2/2. It functions in the pathway nucleotide-sugar biosynthesis; UDP-N-acetyl-alpha-D-glucosamine biosynthesis; UDP-N-acetyl-alpha-D-glucosamine from N-acetyl-alpha-D-glucosamine 1-phosphate: step 1/1. It participates in bacterial outer membrane biogenesis; LPS lipid A biosynthesis. Its function is as follows. Catalyzes the last two sequential reactions in the de novo biosynthetic pathway for UDP-N-acetylglucosamine (UDP-GlcNAc). The C-terminal domain catalyzes the transfer of acetyl group from acetyl coenzyme A to glucosamine-1-phosphate (GlcN-1-P) to produce N-acetylglucosamine-1-phosphate (GlcNAc-1-P), which is converted into UDP-GlcNAc by the transfer of uridine 5-monophosphate (from uridine 5-triphosphate), a reaction catalyzed by the N-terminal domain. The chain is Bifunctional protein GlmU from Albidiferax ferrireducens (strain ATCC BAA-621 / DSM 15236 / T118) (Rhodoferax ferrireducens).